A 759-amino-acid polypeptide reads, in one-letter code: Phosphoribosylformylglycinamidine synthase subunit PurL (759 aa).

Residue H61 is part of the active site. Residues Y64 and K105 each coordinate ATP. E107 contributes to the Mg(2+) binding site. Substrate contacts are provided by residues 108-111 (SHNH) and R130. The active-site Proton acceptor is H109. D131 contributes to the Mg(2+) binding site. Q260 provides a ligand contact to substrate. Position 288 (D288) interacts with Mg(2+). Substrate is bound at residue 332-334 (ESQ). Positions 520 and 557 each coordinate ATP. N558 lines the Mg(2+) pocket. S560 is a substrate binding site.

The protein belongs to the FGAMS family. As to quaternary structure, monomer. Part of the FGAM synthase complex composed of 1 PurL, 1 PurQ and 2 PurS subunits.

The protein resides in the cytoplasm. It catalyses the reaction N(2)-formyl-N(1)-(5-phospho-beta-D-ribosyl)glycinamide + L-glutamine + ATP + H2O = 2-formamido-N(1)-(5-O-phospho-beta-D-ribosyl)acetamidine + L-glutamate + ADP + phosphate + H(+). It functions in the pathway purine metabolism; IMP biosynthesis via de novo pathway; 5-amino-1-(5-phospho-D-ribosyl)imidazole from N(2)-formyl-N(1)-(5-phospho-D-ribosyl)glycinamide: step 1/2. Functionally, part of the phosphoribosylformylglycinamidine synthase complex involved in the purines biosynthetic pathway. Catalyzes the ATP-dependent conversion of formylglycinamide ribonucleotide (FGAR) and glutamine to yield formylglycinamidine ribonucleotide (FGAM) and glutamate. The FGAM synthase complex is composed of three subunits. PurQ produces an ammonia molecule by converting glutamine to glutamate. PurL transfers the ammonia molecule to FGAR to form FGAM in an ATP-dependent manner. PurS interacts with PurQ and PurL and is thought to assist in the transfer of the ammonia molecule from PurQ to PurL. This is Phosphoribosylformylglycinamidine synthase subunit PurL from Thermoplasma volcanium (strain ATCC 51530 / DSM 4299 / JCM 9571 / NBRC 15438 / GSS1).